Here is a 111-residue protein sequence, read N- to C-terminus: UPF0060 membrane protein Aave_2845 (111 aa).

4 helical membrane passes run 7 to 27 (FLLYAVTALAEIAGCYLPWLW), 33 to 53 (SAWLLVPGAACLALFAWLLTL), 63 to 83 (AAYGGVYVAVALGWLWAVDGI), and 90 to 110 (LAGAAVTLAGMAIIAFAPRGA).

It belongs to the UPF0060 family.

Its subcellular location is the cell inner membrane. The chain is UPF0060 membrane protein Aave_2845 from Paracidovorax citrulli (strain AAC00-1) (Acidovorax citrulli).